The sequence spans 98 residues: Signal peptidase complex subunit 1 (98 aa).

Residues 1–18 lie on the Cytoplasmic side of the membrane; it reads MLDIQTHMDFAGQGKAER. The helical transmembrane segment at 19–38 threads the bilayer; sequence WSRFIITFFGIVGLVYGAFV. The Lumenal segment spans residues 39-42; that stretch reads QQFS. The chain crosses the membrane as a helical span at residues 43 to 65; that stretch reads QTVYILGAGFVLSSLITIPPWPL. The Cytoplasmic portion of the chain corresponds to 66–98; sequence YRRNALKWQKPIDTDAKSSSSESGDEGKKKKKQ. The segment at 78–98 is disordered; that stretch reads DTDAKSSSSESGDEGKKKKKQ. Phosphoserine is present on residues Ser-84, Ser-85, Ser-86, and Ser-88.

It belongs to the SPCS1 family. As to quaternary structure, component of the signal peptidase complex (SPC) composed of a catalytic subunit twr/SEC11 and three accessory subunits Spase12/SPCS1, Spase25/SPCS2 and Spase22-23/SPCS3. The complex induces a local thinning of the ER membrane which is used to measure the length of the signal peptide (SP) h-region of protein substrates. This ensures the selectivity of the complex towards h-regions shorter than 18-20 amino acids.

Its subcellular location is the endoplasmic reticulum membrane. In terms of biological role, component of the signal peptidase complex (SPC) which catalyzes the cleavage of N-terminal signal sequences from nascent proteins as they are translocated into the lumen of the endoplasmic reticulum. Dispensable for SPC enzymatic activity. Its function is as follows. (Microbial infection) Plays an important role in infection by flaviviruses such as West Nile virus and Dengue virus type 2. This Drosophila melanogaster (Fruit fly) protein is Signal peptidase complex subunit 1 (Spase12).